Reading from the N-terminus, the 1173-residue chain is MRKAMFGKRERWVFGKVIEPLEIPNLIEIQLKSFKWFLEEGLLDVLKKYSPIKSQIQRPDSRKNEKGFSLEFVRTRIGNPKYNIQECKDKGLTYSVPLYVTVRITDLYSGEIKEEEAFFGYLPYMTDNASFIINGAERVIVNQLVRSPGVYFVDEPTKASSGSLPILVAHFLPVKGAWLEILLNPNKKVLQVRIDRRRKMNLFLLLKTLGYEDDLELLDLFVHDVDANDEYVLLEHVGSIILSDVKTRNELIAERGAVLTEALAKKIAESDVDVIKLPMPIAMSTLKAFHRTYGENIKSEDAYIEIFRKLRPGEIPRINAAKNYLHNLYFSPDRFDFSEVGRHKINSRLRKVYKEYLKEVKKTEVPEDIEYAEESTVLTELDIVLAARHLAQLESHPELLDTKDHLGNKRVRTVGELMQNEFEKAFVKIHKLLEEKLTIYTSFDKVTVQNLVNVRTLMTTLHQFFATSQLSQFMDQVNPLAELTHKRRLSAIGPGGLKREHARFEVRDVHHSHYGRMCPIETPEGANIGLMTSLSTYATIDKYGFLLTPYRKVKNGKVTDEIVYLAADEEELYNIAQSTIEVDDNGNIVESVVEVRHAGEIKYVEKEKVDLMAISPKQIVSVSTSLIPFLEHDDANRALMGSNMQRQAVPVIKPEAPIVGTGVEAIAARDSGYVVLAKHRGIVKKVDSRKIIIERIDEDGNPILSESGEPIQDVYTLHKFIRTNQDTTINQRPIVSQGETVEKGDPIADGPSTDMGELALGKNIFVAFLPWEGYNFEDAILVSQELLEEETFTTIHIEMYETVARDTQLGPEEITADIPNVSKELLKNLDENGIVRVGAYVSSGDILVGKVTPKGESDTTPEEKIIRSVFGDRGRDVKDTSLRVPHGVEGRVIDVKVFDKEEISELGSGVNKLVKVYVACRKPLDVGDKLAGRHGNKGVVSNIIPKEDMPFLPDGTPVQIVLSPLGVPSRMNVGQVLETHLGWLGQLTNRYFATPIFDGAKEDEIMEELYKARKAAGIDVGDSKKEKNGKVLLRDGRSGLPFDYPVVVGVMYMLKLVHIAKDKIHARSTGPYSLIHQQPLGGKAHFGGQRFGEMEVWALEAHGAAHTLNEVLTVKSDDIKGRNEVYKAILKGLNVPGPGIPESFKVLIKELQGLALDIRVYDQNGNELDVDKL.

This sequence belongs to the RNA polymerase beta chain family. The RNAP catalytic core consists of 2 alpha, 1 beta, 1 beta' and 1 omega subunit. When a sigma factor is associated with the core the holoenzyme is formed, which can initiate transcription.

The enzyme catalyses RNA(n) + a ribonucleoside 5'-triphosphate = RNA(n+1) + diphosphate. Functionally, DNA-dependent RNA polymerase catalyzes the transcription of DNA into RNA using the four ribonucleoside triphosphates as substrates. This is DNA-directed RNA polymerase subunit beta from Kosmotoga olearia (strain ATCC BAA-1733 / DSM 21960 / TBF 19.5.1).